A 71-amino-acid polypeptide reads, in one-letter code: Conotoxin De13.1 (71 aa).

A signal peptide spans M1–A19. A propeptide spanning residues F20–L35 is cleaved from the precursor. 2 positions are modified to 4-hydroxyproline: P40 and P44. W51 carries the post-translational modification 6'-bromotryptophan. 4-carboxyglutamate is present on E52. Position 55 is a 5-hydroxylysine (K55). P58 is modified (4-hydroxyproline). A Histidine amide modification is found at H69.

Belongs to the conotoxin G superfamily. Post-translationally, contains 4 disulfide bonds. In terms of tissue distribution, expressed by the venom duct.

It is found in the secreted. The chain is Conotoxin De13.1 from Conasprella delessertii (Sozon's cone).